The chain runs to 159 residues: 3-hydroxyacyl-[acyl-carrier-protein] dehydratase FabZ (159 aa).

H58 is a catalytic residue.

The protein belongs to the thioester dehydratase family. FabZ subfamily.

It localises to the cytoplasm. It catalyses the reaction a (3R)-hydroxyacyl-[ACP] = a (2E)-enoyl-[ACP] + H2O. Involved in unsaturated fatty acids biosynthesis. Catalyzes the dehydration of short chain beta-hydroxyacyl-ACPs and long chain saturated and unsaturated beta-hydroxyacyl-ACPs. In Helicobacter pylori (strain J99 / ATCC 700824) (Campylobacter pylori J99), this protein is 3-hydroxyacyl-[acyl-carrier-protein] dehydratase FabZ.